Here is a 372-residue protein sequence, read N- to C-terminus: Alanine dehydrogenase (372 aa).

Residues Arg15 and Lys75 each contribute to the substrate site. His96 serves as the catalytic Proton donor/acceptor. Residues Ser134, Ile178–Ala179, Asp198, Ser220, Val239–Leu240, Ile267–Asp270, Arg280, and Val299–Met302 contribute to the NAD(+) site. Catalysis depends on Asp270, which acts as the Proton donor/acceptor.

It belongs to the AlaDH/PNT family. In terms of assembly, homohexamer.

The protein resides in the cytoplasm. It carries out the reaction L-alanine + NAD(+) + H2O = pyruvate + NH4(+) + NADH + H(+). The protein operates within amino-acid degradation; L-alanine degradation via dehydrogenase pathway; NH(3) and pyruvate from L-alanine: step 1/1. Its activity is regulated as follows. Inhibited by p-chloromercuribenzoate and HgCl(2) and by Cu(2+) and Pb(2+) salts, unaffected by amino acids such as D-alanine and beta-alanine or by nucleotides or nucleosides. Its function is as follows. Catalyzes the reversible reductive amination of pyruvate to L-alanine. Prefers L-alanine for oxidative deamination, other substrates are poorly reactive. In the other direction 2-oxobutyrate is almost as reactive as pyruvate. Ammonia is the sole amino donor for the reductive amination of pyruvate, NADPH is inert. Reductive amination proceeds through a sequential, ordered ternary-binary mechanism, where NADH binds first followed by ammonia and pyruvate; the products are released in the order L-alanine and NAD(+). A key factor in the assimilation of L-alanine as an energy source via the tricarboxylic acid cycle during sporulation. This is Alanine dehydrogenase (ald) from Lysinibacillus sphaericus (Bacillus sphaericus).